Consider the following 324-residue polypeptide: Homeobox protein engrailed-2 (324 aa).

Disordered stretches follow at residues 1-59 (MEEK…HQHP), 89-174 (GGAR…VLKA), and 215-240 (DRPSSGPRSRKPKKKNPNKEDKRPRT). Residues 89 to 110 (GGARGGEGGAGTTEGGGGGAGG) are compositionally biased toward gly residues. The segment at residues 235-294 (DKRPRTAFTAEQLQRLKAEFQTNRYLTEQRRQSLAQELSLNESQIKIWFQNKRAKIKKAT) is a DNA-binding region (homeobox).

Belongs to the engrailed homeobox family. As to expression, cerebellar granule cells.

The protein resides in the nucleus. The chain is Homeobox protein engrailed-2 (En2) from Mus musculus (Mouse).